The chain runs to 213 residues: High frequency lysogenization protein HflD homolog (213 aa).

The stretch at 79–126 (QGLNAELTRYTLSLMVLERKLSSAKGALDTLGNRINGLQRQLEHFDLQ) forms a coiled coil.

Belongs to the HflD family.

Its subcellular location is the cytoplasm. It localises to the cell inner membrane. This Shigella boydii serotype 18 (strain CDC 3083-94 / BS512) protein is High frequency lysogenization protein HflD homolog.